A 920-amino-acid polypeptide reads, in one-letter code: 2-oxoadipate dehydrogenase complex component E1 (920 aa).

A disordered region spans residues 299 to 322; that stretch reads QGKTRGRQQVKQDGDYSTDPHSRP. A compositionally biased stretch (basic and acidic residues) spans 308–322; it reads VKQDGDYSTDPHSRP.

This sequence belongs to the alpha-ketoglutarate dehydrogenase family. In terms of assembly, the 2-oxoadipate dehydrogenase complex is composed of OADH (2-oxoadipate dehydrogenase; E1a), DLST (dihydrolipoamide succinyltransferase; E2) and DLD (dihydrolipoamide dehydrogenase; E3). E1a functional unit is a dimer. Thiamine diphosphate serves as cofactor.

It is found in the mitochondrion. The enzyme catalyses N(6)-[(R)-lipoyl]-L-lysyl-[protein] + 2-oxoadipate + H(+) = N(6)-[(R)-S(8)-glutaryldihydrolipoyl]-L-lysyl-[protein] + CO2. The protein operates within amino-acid degradation. 2-oxoadipate dehydrogenase (E1a) component of the 2-oxoadipate dehydrogenase complex (OADHC). Participates in the first step, rate limiting for the overall conversion of 2-oxoadipate (alpha-ketoadipate) to glutaryl-CoA and CO(2) catalyzed by the whole OADHC. Catalyzes the irreversible decarboxylation of 2-oxoadipate via the thiamine diphosphate (ThDP) cofactor and subsequent transfer of the decarboxylated acyl intermediate on an oxidized dihydrolipoyl group that is covalently amidated to the E2 enzyme (dihydrolipoyllysine-residue succinyltransferase or DLST). Can catalyze the decarboxylation of 2-oxoglutarate in vitro, but at a much lower rate than 2-oxoadipate. Responsible for the last step of L-lysine, L-hydroxylysine and L-tryptophan catabolism with the common product being 2-oxoadipate. This chain is 2-oxoadipate dehydrogenase complex component E1 (dhtkd1), found in Danio rerio (Zebrafish).